Reading from the N-terminus, the 393-residue chain is STE20-related kinase adapter protein alpha (393 aa).

Phosphoserine is present on residues Ser2 and Ser9. A Protein kinase domain is found at Tyr32–Phe341. Thr381 is subject to Phosphothreonine; by LKB1.

This sequence belongs to the protein kinase superfamily. STE Ser/Thr protein kinase family. STE20 subfamily. Component of a trimeric complex composed of STK11/LKB1, STRAD (STRADA or STRADB) and CAB39/MO25 (CAB39/MO25alpha or CAB39L/MO25beta): the complex tethers STK11/LKB1 in the cytoplasm and stimulates its catalytic activity. As to expression, expressed in liver.

The protein localises to the nucleus. The protein resides in the cytoplasm. Functionally, pseudokinase which, in complex with CAB39/MO25 (CAB39/MO25alpha or CAB39L/MO25beta), binds to and activates STK11/LKB1. Adopts a closed conformation typical of active protein kinases and binds STK11/LKB1 as a pseudosubstrate, promoting conformational change of STK11/LKB1 in an active conformation. In Rattus norvegicus (Rat), this protein is STE20-related kinase adapter protein alpha (Strada).